Consider the following 188-residue polypeptide: Pyridoxal 5'-phosphate synthase subunit PdxT (188 aa).

Gly-46–Ser-48 contacts L-glutamine. The Nucleophile role is filled by Cys-78. Residues Arg-105 and Ile-134–Arg-135 contribute to the L-glutamine site. Catalysis depends on charge relay system residues His-170 and Glu-172.

It belongs to the glutaminase PdxT/SNO family. In the presence of PdxS, forms a dodecamer of heterodimers. Only shows activity in the heterodimer.

It carries out the reaction aldehydo-D-ribose 5-phosphate + D-glyceraldehyde 3-phosphate + L-glutamine = pyridoxal 5'-phosphate + L-glutamate + phosphate + 3 H2O + H(+). It catalyses the reaction L-glutamine + H2O = L-glutamate + NH4(+). Its pathway is cofactor biosynthesis; pyridoxal 5'-phosphate biosynthesis. Functionally, catalyzes the hydrolysis of glutamine to glutamate and ammonia as part of the biosynthesis of pyridoxal 5'-phosphate. The resulting ammonia molecule is channeled to the active site of PdxS. The polypeptide is Pyridoxal 5'-phosphate synthase subunit PdxT (Thermotoga neapolitana (strain ATCC 49049 / DSM 4359 / NBRC 107923 / NS-E)).